A 583-amino-acid polypeptide reads, in one-letter code: Penicillin-binding protein activator LpoA (583 aa).

Residues 1 to 24 (MATILKQKLKTFFVPTAITLLLSA) form the signal peptide. Cys25 carries N-palmitoyl cysteine lipidation. A lipid anchor (S-diacylglycerol cysteine) is attached at Cys25.

This sequence belongs to the LpoA family. In terms of assembly, interacts with PBP1a.

The protein resides in the cell outer membrane. In terms of biological role, regulator of peptidoglycan synthesis that is essential for the function of penicillin-binding protein 1A (PBP1a). This Haemophilus ducreyi (strain 35000HP / ATCC 700724) protein is Penicillin-binding protein activator LpoA.